Here is a 456-residue protein sequence, read N- to C-terminus: Phosphomethylpyrimidine synthase (456 aa).

Substrate-binding positions include asparagine 80, methionine 109, tyrosine 139, histidine 175, 195–197, 236–239, and glutamate 275; these read SRG and DSLR. Position 279 (histidine 279) interacts with Zn(2+). Position 302 (tyrosine 302) interacts with substrate. Histidine 343 contacts Zn(2+). [4Fe-4S] cluster-binding residues include cysteine 423, cysteine 426, and cysteine 431.

This sequence belongs to the ThiC family. [4Fe-4S] cluster serves as cofactor.

The enzyme catalyses 5-amino-1-(5-phospho-beta-D-ribosyl)imidazole + S-adenosyl-L-methionine = 4-amino-2-methyl-5-(phosphooxymethyl)pyrimidine + CO + 5'-deoxyadenosine + formate + L-methionine + 3 H(+). Its pathway is cofactor biosynthesis; thiamine diphosphate biosynthesis. Functionally, catalyzes the synthesis of the hydroxymethylpyrimidine phosphate (HMP-P) moiety of thiamine from aminoimidazole ribotide (AIR) in a radical S-adenosyl-L-methionine (SAM)-dependent reaction. In Prochlorococcus marinus (strain MIT 9312), this protein is Phosphomethylpyrimidine synthase.